The primary structure comprises 90 residues: UPF0386 protein Rru_A2144 (90 aa).

The protein belongs to the UPF0386 family.

The polypeptide is UPF0386 protein Rru_A2144 (Rhodospirillum rubrum (strain ATCC 11170 / ATH 1.1.1 / DSM 467 / LMG 4362 / NCIMB 8255 / S1)).